The following is a 268-amino-acid chain: Sexual development regulator velC (268 aa).

Over residues 1–13 (MPHGFDKLLHPEP) the composition is skewed to basic and acidic residues. Disordered stretches follow at residues 1–124 (MPHG…DNFS) and 142–165 (DPDP…NPPH). Residues 14-26 (EPQSPSPPPPPRR) show a composition bias toward pro residues. In terms of domain architecture, Velvet spans 28 to 257 (STQSRYHLHI…ELGFVELKTR (230 aa)). A compositionally biased stretch (basic and acidic residues) spans 92–121 (DGNRDREREREHERERERERETDGVARTDD).

It belongs to the velvet family. VelC subfamily. As to quaternary structure, interacts with velA and vosA.

It is found in the nucleus. Its function is as follows. Velvet-domain-containing protein that acts as a positive regulator of sexual development. This Penicillium rubens (strain ATCC 28089 / DSM 1075 / NRRL 1951 / Wisconsin 54-1255) (Penicillium chrysogenum) protein is Sexual development regulator velC.